A 123-amino-acid polypeptide reads, in one-letter code: Large ribosomal subunit protein uL14 (123 aa).

It belongs to the universal ribosomal protein uL14 family. As to quaternary structure, part of the 50S ribosomal subunit. Forms a cluster with proteins L3 and L19. In the 70S ribosome, L14 and L19 interact and together make contacts with the 16S rRNA in bridges B5 and B8.

Functionally, binds to 23S rRNA. Forms part of two intersubunit bridges in the 70S ribosome. The protein is Large ribosomal subunit protein uL14 of Wigglesworthia glossinidia brevipalpis.